A 288-amino-acid chain; its full sequence is Bifunctional protein FolD (288 aa).

Residues 163-165, Ser188, and Ile229 each bind NADP(+); that span reads GRS.

This sequence belongs to the tetrahydrofolate dehydrogenase/cyclohydrolase family. As to quaternary structure, homodimer.

The enzyme catalyses (6R)-5,10-methylene-5,6,7,8-tetrahydrofolate + NADP(+) = (6R)-5,10-methenyltetrahydrofolate + NADPH. The catalysed reaction is (6R)-5,10-methenyltetrahydrofolate + H2O = (6R)-10-formyltetrahydrofolate + H(+). It functions in the pathway one-carbon metabolism; tetrahydrofolate interconversion. In terms of biological role, catalyzes the oxidation of 5,10-methylenetetrahydrofolate to 5,10-methenyltetrahydrofolate and then the hydrolysis of 5,10-methenyltetrahydrofolate to 10-formyltetrahydrofolate. This Campylobacter curvus (strain 525.92) protein is Bifunctional protein FolD.